A 252-amino-acid polypeptide reads, in one-letter code: Glucosamine-6-phosphate deaminase (252 aa).

Residue D67 is the Proton acceptor; for enolization step of the active site. N137 (for ring-opening step) is an active-site residue. The active-site Proton acceptor; for ring-opening step is the H139. E144 acts as the For ring-opening step in catalysis.

The protein belongs to the glucosamine/galactosamine-6-phosphate isomerase family. NagB subfamily.

It catalyses the reaction alpha-D-glucosamine 6-phosphate + H2O = beta-D-fructose 6-phosphate + NH4(+). It participates in amino-sugar metabolism; N-acetylneuraminate degradation; D-fructose 6-phosphate from N-acetylneuraminate: step 5/5. In terms of biological role, catalyzes the reversible isomerization-deamination of glucosamine 6-phosphate (GlcN6P) to form fructose 6-phosphate (Fru6P) and ammonium ion. The protein is Glucosamine-6-phosphate deaminase of Staphylococcus aureus (strain MRSA252).